Reading from the N-terminus, the 977-residue chain is Fc receptor-like protein 5 (977 aa).

A signal peptide spans 1–15 (MLLWVILLVLAPVSG). Topologically, residues 16 to 851 (QFARTPRPII…ANRSGPFATG (836 aa)) are extracellular. Ig-like C2-type domains follow at residues 23–101 (PIIF…LDFS), 188–271 (PFTR…SVIS), 287–374 (PVLT…LSVT), 380–463 (PVLN…KAVS), 473–556 (PVLT…EVVS), 566–651 (PILT…ISLS), 659–744 (PILT…VTLK), and 752–834 (PVLT…ETVT). Cystine bridges form between Cys-44-Cys-85, Cys-211-Cys-260, and Cys-308-Cys-355. Asn-383 is a glycosylation site (N-linked (GlcNAc...) asparagine). Intrachain disulfides connect Cys-401–Cys-448, Cys-494–Cys-541, Cys-587–Cys-634, Cys-680–Cys-727, and Cys-773–Cys-819. A helical transmembrane segment spans residues 852-872 (VAGGLLSIAGLAAGALLLYCW). Residues 873–977 (LSRKAGRKPA…LFLASSAPHR (105 aa)) are Cytoplasmic-facing. The interval 879–898 (RKPASDPARSPSDSDSQEPT) is disordered. Over residues 883-892 (SDPARSPSDS) the composition is skewed to low complexity. 4 short sequence motifs (ITIM motif) span residues 897 to 902 (PTYHNV), 910 to 915 (PVYTNA), 922 to 927 (VVYSEV), and 952 to 957 (IIYSEV).

As to quaternary structure, interacts with CR2. Interacts with CD19. As to expression, expressed in marginal zone B-cells, immunoblasts, tonsillar germinal center centrocytes and in the intraepithelial and interfollicular regions of the tonsil. Expressed in many lymphoma cell lines and on hairy cell leukemia cells. Isoform 1, isoform 3, isoform 4 and isoform 5 are detected in lymph node, spleen, bone marrow, and small intestine with preponderance of isoform 3. Expressed in mature and memory B-cells and down-regulated in germinal center cells (at protein level).

The protein resides in the cell membrane. Its function is as follows. Plays an important role in B-cell response to antigen that acts both as a negative or positive coreceptor. Inhibits B-cell receptor (BCR) signaling in the absence of CR2 stimulation but engagement with CR2 and the BCR lead to a superior calcium response compared to CR2 and BCR costimulation. May be involved in B-cell development and differentiation in peripheral lymphoid organs and may be useful markers of B-cell stages. May have an immunoregulatory role in marginal zone B-cells. May play a role in fertilization. The sequence is that of Fc receptor-like protein 5 (FCRL5) from Homo sapiens (Human).